Reading from the N-terminus, the 154-residue chain is uncharacterized protein (154 aa).

3 residues coordinate a divalent metal cation: histidine 47, histidine 127, and histidine 131. At tyrosine 150 the chain carries Phosphotyrosine.

The protein belongs to the DinB family. In terms of assembly, homodimer.

This is an uncharacterized protein from Bacillus subtilis (strain 168).